We begin with the raw amino-acid sequence, 274 residues long: Sulfur carrier protein FdhD (274 aa).

C121 acts as the Cysteine persulfide intermediate in catalysis. 258-263 is a Mo-bis(molybdopterin guanine dinucleotide) binding site; it reads FSKPGR.

The protein belongs to the FdhD family.

The protein resides in the cytoplasm. Required for formate dehydrogenase (FDH) activity. Acts as a sulfur carrier protein that transfers sulfur from IscS to the molybdenum cofactor prior to its insertion into FDH. This is Sulfur carrier protein FdhD from Yersinia pestis bv. Antiqua (strain Antiqua).